Here is a 177-residue protein sequence, read N- to C-terminus: CASP-like protein 4D1 (177 aa).

Topologically, residues 1–20 (MTAPTAPSMAAPPAPSMVSR) are cytoplasmic. The helical transmembrane segment at 21 to 41 (MTALFLRVLTFAFLMVSLVIM) threads the bilayer. The Extracellular portion of the chain corresponds to 42–66 (TTNTGTIEIGIDEFKVRSKDFYSYR). Residues 67 to 87 (YMLAAIAFGLTYTILQIALTL) traverse the membrane as a helical segment. Topologically, residues 88–107 (NHISKRNGAQTSGDGNLVFD) are cytoplasmic. The chain crosses the membrane as a helical span at residues 108–128 (FYGDKVVSYILATGAAAAFGA). Topologically, residues 129–153 (TKELKTQLAGLGGDKFFNKGYASAS) are extracellular. A helical membrane pass occupies residues 154–174 (LLLLGFVCTAILSVFSSYALP). At 175 to 177 (KKV) the chain is on the cytoplasmic side.

Belongs to the Casparian strip membrane proteins (CASP) family. As to quaternary structure, homodimer and heterodimers.

It is found in the cell membrane. The protein is CASP-like protein 4D1 of Populus trichocarpa (Western balsam poplar).